The chain runs to 501 residues: Zinc finger protein PLAG1 (501 aa).

A disordered region spans residues 1-30; that stretch reads MATVIPGDLSEVRDTQKVPSGKRKRGETKP. The Nuclear localization signal motif lies at 22 to 25; sequence KRKR. 7 C2H2-type zinc fingers span residues 34-56, 62-86, 92-114, 121-143, 150-172, 185-207, and 213-236; these read FPCQ…SYSH, YKCT…MATH, HKCN…LHTH, FKCE…LALH, LTCK…LKTH, HQCE…MVVH, and FLCQ…KKSH. 2 stretches are compositionally biased toward low complexity: residues 366 to 380 and 455 to 467; these read SGMP…ASSS and TQLP…PQDP. Disordered stretches follow at residues 366-406 and 447-474; these read SGMP…GSVP and QEEA…IGLG.

The protein belongs to the krueppel C2H2-type zinc-finger protein family. In terms of tissue distribution, expressed in nephroblastoma.

Its subcellular location is the nucleus. Transcription factor and proto-oncogene whose activation results in up-regulation of target genes, such as IGFII, leading to uncontrolled cell proliferation. The protein is Zinc finger protein PLAG1 (PLAG1) of Gallus gallus (Chicken).